Consider the following 543-residue polypeptide: Oligopeptide-binding protein AppA (543 aa).

An N-terminal signal peptide occupies residues 1–23 (MKRRKTALMMLSVLMVLAIFLSA). A lipid anchor (N-palmitoyl cysteine) is attached at C24. A lipid anchor (S-diacylglycerol cysteine) is attached at C24.

Belongs to the bacterial solute-binding protein 5 family.

Its subcellular location is the cell membrane. Functionally, this protein is a component of an oligopeptide permease, a binding protein-dependent transport system. This APP system can completely substitute for the OPP system in both sporulation and genetic competence. AppA can bind and transport tetra- and pentapeptides but not tripeptides. In Bacillus subtilis (strain 168), this protein is Oligopeptide-binding protein AppA (appA).